The primary structure comprises 552 residues: Leucine-rich repeat-containing protein 56 (552 aa).

LRR repeat units follow at residues 94–115 (NLIQ…GTSL), 117–138 (HLQV…GSFL), 139–160 (ELKE…CLLE), 161–182 (QLEV…RYLQ), and 186–206 (RLAM…PGPS). 2 disordered regions span residues 348–375 (APLE…AESC) and 401–435 (QQER…PPRL).

The protein belongs to the LRRC56 family. In terms of assembly, interacts with IFT88.

It localises to the cell projection. It is found in the cilium. Functionally, required for the assembly of dynein arms. This is Leucine-rich repeat-containing protein 56 (Lrrc56) from Mus musculus (Mouse).